The following is an 87-amino-acid chain: MPNPHYRSTSYRKIHTKLPSGKSTIHYERRKNNRAVCAICKKPLQGVKTNLLYKYSKTEKRPERMYGGYICYKCLENLIKQTLRGSS.

This sequence belongs to the eukaryotic ribosomal protein eL34 family.

The polypeptide is Large ribosomal subunit protein eL34 (Sulfurisphaera tokodaii (strain DSM 16993 / JCM 10545 / NBRC 100140 / 7) (Sulfolobus tokodaii)).